The following is a 469-amino-acid chain: Exodeoxyribonuclease 7 large subunit (469 aa).

Belongs to the XseA family. In terms of assembly, heterooligomer composed of large and small subunits.

It localises to the cytoplasm. It carries out the reaction Exonucleolytic cleavage in either 5'- to 3'- or 3'- to 5'-direction to yield nucleoside 5'-phosphates.. In terms of biological role, bidirectionally degrades single-stranded DNA into large acid-insoluble oligonucleotides, which are then degraded further into small acid-soluble oligonucleotides. The chain is Exodeoxyribonuclease 7 large subunit from Mycoplasma mycoides subsp. mycoides SC (strain CCUG 32753 / NCTC 10114 / PG1).